Reading from the N-terminus, the 38-residue chain is Natriuretic peptide DNP (38 aa).

A disulfide bridge links C7 with C23. Positions 19 to 38 are disordered; that stretch reads SNLGCPSLRDPRPNAPSTSA.

This sequence belongs to the natriuretic peptide family. Expressed by the venom gland.

The protein resides in the secreted. Exhibits vasodilator, natriuretic and diuretic properties in animal models and human tissues. Acts by stimulating cGMP via the natriuretic peptide receptor 1 (NPR1). Is a poor agonist of the atrial natriuretic peptide receptor 2 (NPR2). Is not degraded by neutral endopeptidase (NEP/MME). Binds to atrial natriuretic peptide clearance receptor (NPR-C/NPR3), which may be responsible of the removal of DNP from the circulation. Increases calcium uptake and induces histamine release from rat peritoneal mast cells. Increases calcium-activated potassium (KCa) current in gastric antral circular smooth muscle cells by increasing cGMP production and activating inositol trisphosphate receptors (IP3Rs). In vivo, reduces both systolic and diastolic blood pressure with no effect on heart rate, when intravenously injected in conscious rabbits. In Dendroaspis angusticeps (Eastern green mamba), this protein is Natriuretic peptide DNP.